We begin with the raw amino-acid sequence, 472 residues long: Methanethiol oxidase (472 aa).

Residue alanine 2 is modified to N-acetylalanine. Serine 467 carries the phosphoserine modification.

This sequence belongs to the selenium-binding protein family. Interacts with USP33. The N-terminus is blocked.

Its subcellular location is the nucleus. It localises to the cytoplasm. The protein localises to the cytosol. It is found in the membrane. The catalysed reaction is methanethiol + O2 + H2O = hydrogen sulfide + formaldehyde + H2O2 + H(+). The protein operates within organosulfur degradation. In terms of biological role, catalyzes the oxidation of methanethiol, an organosulfur compound known to be produced in substantial amounts by gut bacteria. Selenium-binding protein which may be involved in the sensing of reactive xenobiotics in the cytoplasm. May be involved in intra-Golgi protein transport. In Bos taurus (Bovine), this protein is Methanethiol oxidase (SELENBP1).